The chain runs to 2684 residues: Probable polyketide synthase 27 (2684 aa).

In terms of domain architecture, Ketosynthase family 3 (KS3) spans 11–442 (CGDVAIIGIG…GSNVCLILSE (432 aa)). Residues cysteine 183, histidine 322, and histidine 365 each act as for beta-ketoacyl synthase activity in the active site. The acyl/malonyl transferases stretch occupies residues 650–683 (GVSADIIVGHSLGEMSSSYSSGMIDFETLCYLIY). Serine 660 functions as the For acyl/malonyl transferase activity in the catalytic mechanism. The interval 958 to 1087 (HEKITSEGPP…GNFSLFKHNS (130 aa)) is N-terminal hotdog fold. Residues 958-1276 (HEKITSEGPP…CTSVSLVNPR (319 aa)) form the PKS/mFAS DH domain. Histidine 999 serves as the catalytic Proton acceptor; for dehydratase activity. The interval 1104–1276 (NFTTISKQEF…CTSVSLVNPR (173 aa)) is C-terminal hotdog fold. Aspartate 1173 functions as the Proton donor; for dehydratase activity in the catalytic mechanism. The disordered stretch occupies residues 1202 to 1221 (IPSSSSSSKDDNDCDSNNNN). In terms of domain architecture, Carrier spans 2585 to 2662 (SDNEFIHSTI…QSIDIIKFGY (78 aa)). O-(pantetheine 4'-phosphoryl)serine is present on serine 2622.

Pantetheine 4'-phosphate serves as cofactor.

In terms of biological role, probable polyketide synthase. This is Probable polyketide synthase 27 (pks27) from Dictyostelium discoideum (Social amoeba).